The chain runs to 168 residues: Ribosome maturation factor RimM (168 aa).

The PRC barrel domain occupies 93–168 (EDEFYQSDLV…IVLNIPEFID (76 aa)).

The protein belongs to the RimM family. In terms of assembly, binds ribosomal protein uS19.

It is found in the cytoplasm. In terms of biological role, an accessory protein needed during the final step in the assembly of 30S ribosomal subunit, possibly for assembly of the head region. Essential for efficient processing of 16S rRNA. May be needed both before and after RbfA during the maturation of 16S rRNA. It has affinity for free ribosomal 30S subunits but not for 70S ribosomes. The chain is Ribosome maturation factor RimM from Wolbachia pipientis wMel.